A 430-amino-acid polypeptide reads, in one-letter code: MLDPNLLRNEPDAVAEKLARRGFKLDVDKLRALEERRKVLQVNTENLQAERNSRSKSIGQAKARGEDIEPLRLEVNKLGEELDAAKAELDTLLAEIRNIALTIPNLPADEVPVGKDENDNVEVSRWGTPREFDFEIRDHVTLGEMHSGLDFAAAVKLTGSRFVVMKGQIARMHRALSQFMLDLHTEQHGYSENYVPYLVNHDTLYGTGQLPKFAGDLFHTRPLEEEADSSNYALIPTAEVPLTNLVRDEIIDEDQLPIKMTAHTPCFRSEAGSYGRDTRGLIRMHQFDKVEMVQIVRPEDSMAALEEMTGHAEKVLQLLGLPYRKIILCTGDMGFGACKTYDLEVWVPAQNTYREISSCSNVWDFQARRMQARCRSKSDKKTRLVHTLNGSGLAVGRTLVAVMENYQQADGRIEVPEVLRPYMNELEYIG.

L-serine is bound at residue 237–239; sequence TAE. Residue 268-270 coordinates ATP; that stretch reads RSE. Position 291 (Glu291) interacts with L-serine. 355–358 is a binding site for ATP; it reads EISS. Ser391 provides a ligand contact to L-serine.

This sequence belongs to the class-II aminoacyl-tRNA synthetase family. Type-1 seryl-tRNA synthetase subfamily. As to quaternary structure, homodimer. The tRNA molecule binds across the dimer.

It is found in the cytoplasm. The enzyme catalyses tRNA(Ser) + L-serine + ATP = L-seryl-tRNA(Ser) + AMP + diphosphate + H(+). It catalyses the reaction tRNA(Sec) + L-serine + ATP = L-seryl-tRNA(Sec) + AMP + diphosphate + H(+). The protein operates within aminoacyl-tRNA biosynthesis; selenocysteinyl-tRNA(Sec) biosynthesis; L-seryl-tRNA(Sec) from L-serine and tRNA(Sec): step 1/1. In terms of biological role, catalyzes the attachment of serine to tRNA(Ser). Is also able to aminoacylate tRNA(Sec) with serine, to form the misacylated tRNA L-seryl-tRNA(Sec), which will be further converted into selenocysteinyl-tRNA(Sec). The protein is Serine--tRNA ligase of Salmonella schwarzengrund (strain CVM19633).